A 172-amino-acid polypeptide reads, in one-letter code: Protein-export protein SecB (172 aa).

It belongs to the SecB family. Homotetramer, a dimer of dimers. One homotetramer interacts with 1 SecA dimer.

The protein resides in the cytoplasm. Functionally, one of the proteins required for the normal export of preproteins out of the cell cytoplasm. It is a molecular chaperone that binds to a subset of precursor proteins, maintaining them in a translocation-competent state. It also specifically binds to its receptor SecA. This chain is Protein-export protein SecB, found in Ralstonia pickettii (strain 12J).